The primary structure comprises 548 residues: Chaperonin GroEL 1 (548 aa).

ATP-binding positions include 30–33 (TLGP), K51, 87–91 (DGTTT), G415, 479–481 (NAA), and D495.

This sequence belongs to the chaperonin (HSP60) family. In terms of assembly, forms a cylinder of 14 subunits composed of two heptameric rings stacked back-to-back. Interacts with the co-chaperonin GroES.

The protein localises to the cytoplasm. The catalysed reaction is ATP + H2O + a folded polypeptide = ADP + phosphate + an unfolded polypeptide.. Its function is as follows. Together with its co-chaperonin GroES, plays an essential role in assisting protein folding. The GroEL-GroES system forms a nano-cage that allows encapsulation of the non-native substrate proteins and provides a physical environment optimized to promote and accelerate protein folding. This Anaeromyxobacter dehalogenans (strain 2CP-C) protein is Chaperonin GroEL 1.